The primary structure comprises 110 residues: Putative zinc finger protein ORF110 (110 aa).

A C2H2-type zinc finger spans residues 3–26 (YVCTACKLKFHTFEEFKIHVHLFH).

The sequence is that of Putative zinc finger protein ORF110 from Acidianus filamentous virus 1 (isolate United States/Yellowstone) (AFV-1).